The chain runs to 205 residues: Cytochrome c biogenesis ATP-binding export protein CcmA 1 (205 aa).

Positions leucine 2–leucine 205 constitute an ABC transporter domain. An ATP-binding site is contributed by glycine 34–threonine 41.

It belongs to the ABC transporter superfamily. CcmA exporter (TC 3.A.1.107) family. In terms of assembly, the complex is composed of two ATP-binding proteins (CcmA) and two transmembrane proteins (CcmB).

It localises to the cell inner membrane. The catalysed reaction is heme b(in) + ATP + H2O = heme b(out) + ADP + phosphate + H(+). Its function is as follows. Part of the ABC transporter complex CcmAB involved in the biogenesis of c-type cytochromes; once thought to export heme, this seems not to be the case, but its exact role is uncertain. Responsible for energy coupling to the transport system. This is Cytochrome c biogenesis ATP-binding export protein CcmA 1 from Salmonella paratyphi A (strain ATCC 9150 / SARB42).